Consider the following 495-residue polypeptide: DNA double-strand break repair helicase HerA (495 aa).

ATP is bound by residues Arg141, 150 to 155, and 458 to 459; these read GSGKSN and KI.

Belongs to the HerA family. Forms a hexamer or a heptamer. Interacts with Mre11.

The catalysed reaction is Couples ATP hydrolysis with the unwinding of duplex DNA at the replication fork by translocating in the 5'-3' direction. This creates two antiparallel DNA single strands (ssDNA). The leading ssDNA polymer is the template for DNA polymerase III holoenzyme which synthesizes a continuous strand.. It catalyses the reaction ATP + H2O = ADP + phosphate + H(+). The enzyme catalyses Couples ATP hydrolysis with the unwinding of duplex DNA by translocating in the 3'-5' direction.. ATPase activity is slightly stimulated by either circular single- or double-stranded (ds)DNA with a weak preference for dsDNA. Helicase activity is stimulated by Mre11. Functionally, involved in DNA double-strand break (DSB) repair. Probably acts with NurA to stimulate resection of the 5' strand and produce the long 3' single-strand that is required for RadA loading. Has DNA-dependent ATPase activity and bidirectional DNA helicase activity. Loads on either a 3' or a 5' DNA tail for subsequent DNA unwinding. Can also unwind blunt-ended dsDNA, Holliday junction and splayed-arm DNA. This is DNA double-strand break repair helicase HerA from Sulfurisphaera tokodaii (strain DSM 16993 / JCM 10545 / NBRC 100140 / 7) (Sulfolobus tokodaii).